Here is a 201-residue protein sequence, read N- to C-terminus: UPF0056 membrane protein PH0760 (201 aa).

6 helical membrane passes run F8–F28, I49–F69, I73–S93, V111–M131, G140–G160, and L181–I201.

This sequence belongs to the UPF0056 (MarC) family.

The protein resides in the cell membrane. In Pyrococcus horikoshii (strain ATCC 700860 / DSM 12428 / JCM 9974 / NBRC 100139 / OT-3), this protein is UPF0056 membrane protein PH0760.